The following is a 302-amino-acid chain: tRNA pseudouridine synthase B (302 aa).

Residue D45 is the Nucleophile of the active site.

This sequence belongs to the pseudouridine synthase TruB family. Type 1 subfamily.

The catalysed reaction is uridine(55) in tRNA = pseudouridine(55) in tRNA. Functionally, responsible for synthesis of pseudouridine from uracil-55 in the psi GC loop of transfer RNAs. The sequence is that of tRNA pseudouridine synthase B from Francisella philomiragia subsp. philomiragia (strain ATCC 25017 / CCUG 19701 / FSC 153 / O#319-036).